Reading from the N-terminus, the 415-residue chain is Erythronolide mycarosyltransferase (415 aa).

Belongs to the glycosyltransferase 28 family.

The catalysed reaction is dTDP-beta-L-mycarose + erythronolide B = 3-O-alpha-L-mycarosylerythronolide B + dTDP + H(+). Involved in the biosynthesis of the macrolide antibiotic erythromycin. Catalyzes the reversible transfer of mycarosyl from dTDP-beta-L-mycarose to erythronolide B to yield 3-alpha-L-mycarosylerythronolide B. It can also use TDP-beta-L-cladinose. The protein is Erythronolide mycarosyltransferase of Saccharopolyspora erythraea (Streptomyces erythraeus).